The primary structure comprises 209 residues: Small ribosomal subunit protein uS4 (209 aa).

Positions 9, 12, 26, and 31 each coordinate Zn(2+). A C4-type zinc finger spans residues 9–31 (CRLCRREGVKLYLKGERCYSPKC). One can recognise an S4 RNA-binding domain in the interval 100-162 (RLDNVVYRLG…RNLELIRQNL (63 aa)).

This sequence belongs to the universal ribosomal protein uS4 family. In terms of assembly, part of the 30S ribosomal subunit. Contacts protein S5. The interaction surface between S4 and S5 is involved in control of translational fidelity. It depends on Zn(2+) as a cofactor.

Its function is as follows. One of the primary rRNA binding proteins, it binds directly to 16S rRNA where it helps nucleate assembly of the body and platform of the 30S subunit. This Thermus thermophilus (strain ATCC BAA-163 / DSM 7039 / HB27) protein is Small ribosomal subunit protein uS4 (rpsD).